The primary structure comprises 427 residues: 3-phosphoshikimate 1-carboxyvinyltransferase (427 aa).

Residues Lys-22, Ser-23, and Arg-27 each contribute to the 3-phosphoshikimate site. Lys-22 contributes to the phosphoenolpyruvate binding site. Residues Gly-96 and Arg-124 each contribute to the phosphoenolpyruvate site. 3-phosphoshikimate-binding residues include Ser-169, Ser-170, Gln-171, Ser-197, Asp-313, Asn-336, and Lys-340. Residue Gln-171 coordinates phosphoenolpyruvate. The active-site Proton acceptor is Asp-313. Positions 344, 386, and 411 each coordinate phosphoenolpyruvate.

This sequence belongs to the EPSP synthase family. In terms of assembly, monomer.

The protein localises to the cytoplasm. It carries out the reaction 3-phosphoshikimate + phosphoenolpyruvate = 5-O-(1-carboxyvinyl)-3-phosphoshikimate + phosphate. It participates in metabolic intermediate biosynthesis; chorismate biosynthesis; chorismate from D-erythrose 4-phosphate and phosphoenolpyruvate: step 6/7. Catalyzes the transfer of the enolpyruvyl moiety of phosphoenolpyruvate (PEP) to the 5-hydroxyl of shikimate-3-phosphate (S3P) to produce enolpyruvyl shikimate-3-phosphate and inorganic phosphate. The polypeptide is 3-phosphoshikimate 1-carboxyvinyltransferase (Salmonella paratyphi A (strain ATCC 9150 / SARB42)).